A 457-amino-acid polypeptide reads, in one-letter code: tRNA modification GTPase MnmE (457 aa).

Arginine 25, glutamate 87, and arginine 126 together coordinate (6S)-5-formyl-5,6,7,8-tetrahydrofolate. Positions 223–377 (GISTAIIGRP…IEERINQLFF (155 aa)) constitute a TrmE-type G domain. Position 233 (asparagine 233) interacts with K(+). Residues 233–238 (NVGKSS), 252–258 (TDIEGTT), and 277–280 (DTAG) contribute to the GTP site. Serine 237 contributes to the Mg(2+) binding site. K(+)-binding residues include threonine 252, isoleucine 254, and threonine 257. Threonine 258 is a Mg(2+) binding site. A (6S)-5-formyl-5,6,7,8-tetrahydrofolate-binding site is contributed by lysine 457.

This sequence belongs to the TRAFAC class TrmE-Era-EngA-EngB-Septin-like GTPase superfamily. TrmE GTPase family. In terms of assembly, homodimer. Heterotetramer of two MnmE and two MnmG subunits. K(+) is required as a cofactor.

It localises to the cytoplasm. Exhibits a very high intrinsic GTPase hydrolysis rate. Involved in the addition of a carboxymethylaminomethyl (cmnm) group at the wobble position (U34) of certain tRNAs, forming tRNA-cmnm(5)s(2)U34. In Streptococcus sanguinis (strain SK36), this protein is tRNA modification GTPase MnmE.